A 209-amino-acid polypeptide reads, in one-letter code: Probable L-serine dehydratase, alpha chain (209 aa).

This sequence belongs to the iron-sulfur dependent L-serine dehydratase family. Heterodimer of an alpha chain and a beta chain. It depends on [4Fe-4S] cluster as a cofactor.

The enzyme catalyses L-serine = pyruvate + NH4(+). The protein operates within carbohydrate biosynthesis; gluconeogenesis. This is Probable L-serine dehydratase, alpha chain (sdhA) from Latilactobacillus sakei (Lactobacillus sakei).